The chain runs to 1393 residues: ABC transporter G family member 3 (1393 aa).

The segment covering Met1 to Pro14 has biased composition (basic and acidic residues). The disordered stretch occupies residues Met1–Ser68. Low complexity predominate over residues Asp15 to Asn50. The 254-residue stretch at Val100–Leu353 folds into the ABC transporter 1 domain. ATP is bound at residue Gly144–Ser151. The region spanning Met473–Asn698 is the ABC transmembrane type-2 1 domain. Transmembrane regions (helical) follow at residues Phe479–Thr499, Leu509–Phe529, Ile558–Phe578, Phe585–Val605, Leu615–Ile635, Ile640–Val660, and Val724–Val744. An ABC transporter 2 domain is found at Met783–Tyr1035. Position 828–835 (Gly828–Ser835) interacts with ATP. The ABC transmembrane type-2 2 domain occupies Gln1121–Ile1388. 6 helical membrane-spanning segments follow: residues Thr1122–Leu1142, Leu1157–Val1177, Leu1206–Leu1226, Phe1235–Leu1255, Ile1265–Ile1285, and Phe1364–Ala1384.

Belongs to the ABC transporter superfamily. ABCG family. PDR (TC 3.A.1.205) subfamily.

It is found in the membrane. The chain is ABC transporter G family member 3 (abcG3) from Dictyostelium discoideum (Social amoeba).